The chain runs to 299 residues: Tetrahydromethanopterin S-methyltransferase subunit E (299 aa).

6 consecutive transmembrane segments (helical) span residues 57 to 77, 80 to 100, 133 to 153, 158 to 178, 237 to 257, and 261 to 281; these read AISG…SVAW, INAG…AAIV, IGPI…AAYL, LGNP…VGAI, GLCF…GNII, and LVTK…AAMI.

It belongs to the MtrE family. As to quaternary structure, the complex is composed of 8 subunits; MtrA, MtrB, MtrC, MtrD, MtrE, MtrF, MtrG and MtrH.

It localises to the cell membrane. It catalyses the reaction 5-methyl-5,6,7,8-tetrahydromethanopterin + coenzyme M + 2 Na(+)(in) = 5,6,7,8-tetrahydromethanopterin + methyl-coenzyme M + 2 Na(+)(out). The protein operates within one-carbon metabolism; methanogenesis from CO(2); methyl-coenzyme M from 5,10-methylene-5,6,7,8-tetrahydromethanopterin: step 2/2. Functionally, part of a complex that catalyzes the formation of methyl-coenzyme M and tetrahydromethanopterin from coenzyme M and methyl-tetrahydromethanopterin. This is an energy-conserving, sodium-ion translocating step. This chain is Tetrahydromethanopterin S-methyltransferase subunit E, found in Methanococcus vannielii (strain ATCC 35089 / DSM 1224 / JCM 13029 / OCM 148 / SB).